The sequence spans 451 residues: MNKKILFLGVGGIGVSALAIAAKRLGAHVAGYDSVANKLTAKLEALGIVIFISPNGVDVANFDIVVYSSAILSSHPLLSQARSLGIQCLQRAMFLAVLMKDFSYSLAITGTHGKTTTSSVLATLLCQLDKYSSFIVGGVVKYADSNIQVNGTDKLVIEADESDASFLFLSPQVVIITNIDLDHMATYNNSYQTLLENFTDFVSKESVKSIYLCVDDQGCRDLLAKYNQSDKNVTSYGFSINADVQIYDYHIIDEITHFKIRYKGDDLSFKLQLPGRYNVQNATACIITCLDLGFKYEDIRNALIKVTGVARRFDLYTKVISGHQVTVIDDYGHHPVEVANSISAVRDRYPNKKIIHVFQPHRYTRNRDLIKDWPKALSLADQLILLPTYSADEQIIKGAESQDIVKGLSGYLLADGFDHAIYFLEKLANENTVILIQGAGDVTNLVEILSE.

110 to 116 (GTHGKTT) is a binding site for ATP.

Belongs to the MurCDEF family.

It localises to the cytoplasm. It catalyses the reaction UDP-N-acetyl-alpha-D-muramate + L-alanine + ATP = UDP-N-acetyl-alpha-D-muramoyl-L-alanine + ADP + phosphate + H(+). Its pathway is cell wall biogenesis; peptidoglycan biosynthesis. Functionally, cell wall formation. This chain is UDP-N-acetylmuramate--L-alanine ligase, found in Francisella tularensis subsp. holarctica (strain FTNF002-00 / FTA).